The following is a 280-amino-acid chain: MKYIGAHVSASGGVENAVLRAVEIGANAFALFTKNQRQWKAPALKADTIEKFKRFCKAHQFSPEHILPHDSYLINLGNPEAENLAKSREAFIDEMERANQLGLKLLNFHPGAHLNKISESECLARIAESINIAVDKVPNVIAVIENTAGQGSNLGYRFEHLAEIIDQVEDKNRVGVCLDTCHLFSAGYDISSLESCEQTFSEFERTVGFQYLRGMHLNGSKTPLGSRVDRHHTLREGTIGTDFCKFIMQDDRFDNIPLILETIQPEIWTEEIKFLRTLAK.

Positions 69, 109, 145, 179, 182, 216, 229, 231, and 261 each coordinate Zn(2+).

This sequence belongs to the AP endonuclease 2 family. Requires Zn(2+) as cofactor.

The enzyme catalyses Endonucleolytic cleavage to 5'-phosphooligonucleotide end-products.. In terms of biological role, endonuclease IV plays a role in DNA repair. It cleaves phosphodiester bonds at apurinic or apyrimidinic (AP) sites, generating a 3'-hydroxyl group and a 5'-terminal sugar phosphate. This is Probable endonuclease 4 from Actinobacillus pleuropneumoniae serotype 7 (strain AP76).